Reading from the N-terminus, the 536-residue chain is ATPase expression protein 3 (536 aa).

PPR repeat units follow at residues 212-246 (TTTM…KKTP) and 386-421 (TTGS…GVTP).

Its subcellular location is the mitochondrion inner membrane. Functionally, required for respiration. This is ATPase expression protein 3 (AEP3) from Eremothecium gossypii (strain ATCC 10895 / CBS 109.51 / FGSC 9923 / NRRL Y-1056) (Yeast).